Here is a 215-residue protein sequence, read N- to C-terminus: Probable phosphoglycerate mutase GpmB (215 aa).

Residues 8–15 (RHGETQWN), 21–22 (QG), Arg58, Lys60, 82–85 (ELDM), 104–105 (RR), and 151–152 (GI) each bind substrate. His9 serves as the catalytic Tele-phosphohistidine intermediate. The Proton donor/acceptor role is filled by Glu82.

This sequence belongs to the phosphoglycerate mutase family. GpmB subfamily.

The enzyme catalyses (2R)-2-phosphoglycerate = (2R)-3-phosphoglycerate. It participates in carbohydrate degradation; glycolysis; pyruvate from D-glyceraldehyde 3-phosphate: step 3/5. In Salmonella choleraesuis (strain SC-B67), this protein is Probable phosphoglycerate mutase GpmB.